A 97-amino-acid chain; its full sequence is RNA-binding protein YhbY (97 aa).

Residues methionine 1 to arginine 97 enclose the CRM domain.

This chain is RNA-binding protein YhbY (yhbY), found in Escherichia coli O157:H7.